The sequence spans 661 residues: WD repeat-containing protein 26 (661 aa).

The span at 1–27 (MQANGAGGGGGGGGGGGGGGGGGGGQG) shows a compositional bias: gly residues. Disordered regions lie at residues 1–70 (MQAN…ASNN) and 99–118 (TAASSSLATPELGSSLKKKK). Low complexity-rich tracts occupy residues 56-70 (ANGLLPSAPSAASNN) and 99-113 (TAASSSLATPELGSS). Phosphoserine is present on residues serine 121 and serine 123. A LisH domain is found at 123–155 (SDEDVIRLIGQHLNGLGLNQTVDLLMQESGCRL). A CTLH domain is found at 156-231 (EHPSATKFRN…EYLEDGKVLE (76 aa)). WD repeat units lie at residues 353–392 (EHCNEVWFCKFSNDGTKLATGSKDTTVIIWQVDPDTHLLK), 399–438 (GHAYGVSYIAWSPDDNYLVACGPDDCSELWLWNVQTGELR), 444–484 (SHED…DSWE), 524–563 (QEDHPIMSFTISKNGRLALLNVATQGVHLWDLQDRVLVRK), 566–608 (GVTQ…PIAE), and 611–651 (GHTR…DHQN).

Forms homooligomers. Identified in the CTLH complex that contains GID4, RANBP9 and/or RANBP10, MKLN1, MAEA, RMND5A (or alternatively its paralog RMND5B), GID8, ARMC8, WDR26 and YPEL5. Within this complex, MAEA, RMND5A (or alternatively its paralog RMND5B), GID8, WDR26, and RANBP9 and/or RANBP10 form the catalytic core, while GID4, MKLN1, ARMC8 and YPEL5 have ancillary roles. Interacts with DDB1-CUL4A/B E3 ligase complexes. Forms a complex composed of at least WDR26, a G-beta:gamma unit, and PLCB2. Interacts with AXIN1. Broadly expressed, with highest levels in heart and skeletal muscle.

It localises to the cytoplasm. The protein localises to the nucleus. Its subcellular location is the mitochondrion. G-beta-like protein involved in cell signal transduction. Acts as a negative regulator in MAPK signaling pathway. Functions as a scaffolding protein to promote G beta:gamma-mediated PLCB2 plasma membrane translocation and subsequent activation in leukocytes. Core component of the CTLH E3 ubiquitin-protein ligase complex that selectively accepts ubiquitin from UBE2H and mediates ubiquitination and subsequent proteasomal degradation of the transcription factor HBP1. Acts as a negative regulator of the canonical Wnt signaling pathway through preventing ubiquitination of beta-catenin CTNNB1 by the beta-catenin destruction complex, thus negatively regulating CTNNB1 degradation. Serves as a scaffold to coordinate PI3K/AKT pathway-driven cell growth and migration. Protects cells from oxidative stress-induced apoptosis via the down-regulation of AP-1 transcriptional activity as well as by inhibiting cytochrome c release from mitochondria. Also protects cells by promoting hypoxia-mediated autophagy and mitophagy. In Homo sapiens (Human), this protein is WD repeat-containing protein 26 (WDR26).